The following is a 229-amino-acid chain: Urease accessory protein UreG (229 aa).

24 to 31 (GPVGSGKT) lines the GTP pocket.

It belongs to the SIMIBI class G3E GTPase family. UreG subfamily. Homodimer. UreD, UreF and UreG form a complex that acts as a GTP-hydrolysis-dependent molecular chaperone, activating the urease apoprotein by helping to assemble the nickel containing metallocenter of UreC. The UreE protein probably delivers the nickel.

Its subcellular location is the cytoplasm. Functionally, facilitates the functional incorporation of the urease nickel metallocenter. This process requires GTP hydrolysis, probably effectuated by UreG. The sequence is that of Urease accessory protein UreG from Albidiferax ferrireducens (strain ATCC BAA-621 / DSM 15236 / T118) (Rhodoferax ferrireducens).